Reading from the N-terminus, the 1123-residue chain is Adenylyl cyclase X E (1123 aa).

Topologically, residues 1–47 (MPRSLGNCQLNYSKERMWEPGYLKAKCAELRLESEFRLYRIRLWKSY) are cytoplasmic. The chain crosses the membrane as a helical span at residues 48-68 (LLTFFMLHIFVTSVHCALLLA). The Extracellular segment spans residues 69–73 (TIERR). A helical transmembrane segment spans residues 74–94 (SIIYFDVALSIGCALVLILVL). Topologically, residues 95–106 (SVNFCDEFIAKH) are cytoplasmic. Residues 107–127 (TWYMYASSIFASLTLVFADLT) traverse the membrane as a helical segment. Over 128–137 (ESIYHTYAHS) the chain is Extracellular. A helical transmembrane segment spans residues 138–158 (WILGTFYDTYIIYMIYMFLPI). The Cytoplasmic segment spans residues 159–163 (HFISG). A helical membrane pass occupies residues 164–184 (AVLLALLVSGLYILYFVIFIA). Residues 185-196 (QGFAQFASALFS) are Extracellular-facing. A helical membrane pass occupies residues 197-217 (VGGMSVDIVHYLCLNLVGIFY). The Cytoplasmic segment spans residues 218–581 (RVMNDTVVRS…YLKQTDYMYK (364 aa)). ATP is bound by residues 346–348 (LGD) and Arg392. Asp348 is a Mg(2+) binding site. Residues 582–602 (YSIILSASVGCSLVYIELMDT) traverse the membrane as a helical segment. Residues 603–608 (QMICSS) lie on the Extracellular side of the membrane. Residues 609-629 (CFVLPASVATIQCILALIAWY) form a helical membrane-spanning segment. Topologically, residues 630–667 (KKYCWTRYGRNNVPHHYNGFSCFIFRIHDKILNSLPIR) are cytoplasmic. The helical transmembrane segment at 668–688 (ICIYLFLMISSFFVMCLIVMS) threads the bilayer. The Extracellular portion of the chain corresponds to 689-719 (CQREEFEMAYIEERLFHYEQEAHICFHPWVT). A helical transmembrane segment spans residues 720 to 740 (TNMLSLMICLTFTFAHIPIMV). At 741 to 743 (KTA) the chain is on the cytoplasmic side. A helical transmembrane segment spans residues 744 to 764 (VAILETLAYLLLIFFQFDFVF). Over 765–772 (HHSVTTNP) the chain is Extracellular. The helical transmembrane segment at 773-793 (YFKSEYAHALLICITFLIMFV) threads the bilayer. Residues 794-1123 (KERQIEFTNK…STSRHTLQSL (330 aa)) lie on the Cytoplasmic side of the membrane. Residues Lys903, 1014–1016 (DIW), 1021–1025 (NMASR), and Lys1061 each bind ATP.

It belongs to the adenylyl cyclase class-4/guanylyl cyclase family. As to expression, expressed in labella.

The protein localises to the membrane. The catalysed reaction is ATP = 3',5'-cyclic AMP + diphosphate. Functionally, catalyzes the formation of the signaling molecule cAMP in response to G-protein signaling. This is Adenylyl cyclase X E from Drosophila melanogaster (Fruit fly).